Consider the following 208-residue polypeptide: MSRYTGSTFKKARRYGFSILENGKEFSKGKKRVTTPGQHGKDKARLKMSGYGAQLQEKQKVKFMYGMTERQFRNTFAKAKKVHGGILGTNFLVLLESRLDNIVFRLGFAMTRQAARQLVNHGHILVNGKKLDIPSYQVKPGDSIEVKEAMKKNDKIAEALQNNESTVEFVKVDKANLKGQFVRLPERQELNLEINDALIVEWYNRLIK.

In terms of domain architecture, S4 RNA-binding spans 97 to 160 (SRLDNIVFRL…KKNDKIAEAL (64 aa)).

Belongs to the universal ribosomal protein uS4 family. In terms of assembly, part of the 30S ribosomal subunit. Contacts protein S5. The interaction surface between S4 and S5 is involved in control of translational fidelity.

Its function is as follows. One of the primary rRNA binding proteins, it binds directly to 16S rRNA where it nucleates assembly of the body of the 30S subunit. With S5 and S12 plays an important role in translational accuracy. The protein is Small ribosomal subunit protein uS4 of Mesoplasma florum (strain ATCC 33453 / NBRC 100688 / NCTC 11704 / L1) (Acholeplasma florum).